We begin with the raw amino-acid sequence, 522 residues long: Calcium-dependent protein kinase 4 (522 aa).

Residues 1–10 show a composition bias toward polar residues; the sequence is MGACFSSHTA. The disordered stretch occupies residues 1–43; the sequence is MGACFSSHTATAAADGGSGKRQQRKGDHKGKLPDGGGGEKEKE. Gly2 carries the N-myristoyl glycine lipid modification. A compositionally biased stretch (basic and acidic residues) spans 29–43; sequence KGKLPDGGGGEKEKE. In terms of domain architecture, Protein kinase spans 59-319; sequence YQVGRLLGHG…AAQALSHPWV (261 aa). ATP is bound by residues 65–73 and Lys88; that span reads LGHGQFGYT. Catalysis depends on Asp185, which acts as the Proton acceptor. Residues 325–355 are autoinhibitory domain; sequence ASEIPVDISVLSNMRQFVKYSRFKQFALRAL. 4 consecutive EF-hand domains span residues 362-397, 399-434, 441-476, and 481-508; these read EELA…DLPW, LKGP…IHQM, RWGL…GLKG, and LLEE…ASMS. Ca(2+) is bound by residues Asp375, Asp377, Ser379, Ser381, Glu386, Asp412, Asn414, Asp416, Glu423, Asp454, Asp456, Asp458, Tyr460, Glu465, Asp486, Asp488, Asp490, Arg492, and Glu497.

Belongs to the protein kinase superfamily. Ser/Thr protein kinase family. CDPK subfamily.

Its subcellular location is the membrane. The catalysed reaction is L-seryl-[protein] + ATP = O-phospho-L-seryl-[protein] + ADP + H(+). It carries out the reaction L-threonyl-[protein] + ATP = O-phospho-L-threonyl-[protein] + ADP + H(+). Its activity is regulated as follows. Activated by calcium. Autophosphorylation may play an important role in the regulation of the kinase activity. In terms of biological role, may play a role in signal transduction pathways that involve calcium as a second messenger. The protein is Calcium-dependent protein kinase 4 of Oryza sativa subsp. japonica (Rice).